The primary structure comprises 340 residues: Glycerol-3-phosphate dehydrogenase [NAD(P)+] (340 aa).

Residues S11, W12, R33, and K106 each coordinate NADPH. Sn-glycerol 3-phosphate-binding residues include K106, G137, and S139. A141 is a binding site for NADPH. Residues K192, D245, S255, R256, and N257 each contribute to the sn-glycerol 3-phosphate site. Residue K192 is the Proton acceptor of the active site. R256 lines the NADPH pocket. Residues V280 and E282 each contribute to the NADPH site.

Belongs to the NAD-dependent glycerol-3-phosphate dehydrogenase family.

It localises to the cytoplasm. It carries out the reaction sn-glycerol 3-phosphate + NAD(+) = dihydroxyacetone phosphate + NADH + H(+). The catalysed reaction is sn-glycerol 3-phosphate + NADP(+) = dihydroxyacetone phosphate + NADPH + H(+). It participates in membrane lipid metabolism; glycerophospholipid metabolism. Its function is as follows. Catalyzes the reduction of the glycolytic intermediate dihydroxyacetone phosphate (DHAP) to sn-glycerol 3-phosphate (G3P), the key precursor for phospholipid synthesis. The polypeptide is Glycerol-3-phosphate dehydrogenase [NAD(P)+] (Bacillus cereus (strain G9842)).